The primary structure comprises 119 residues: Ribonuclease P protein component (119 aa).

This sequence belongs to the RnpA family. Consists of a catalytic RNA component (M1 or rnpB) and a protein subunit.

The catalysed reaction is Endonucleolytic cleavage of RNA, removing 5'-extranucleotides from tRNA precursor.. In terms of biological role, RNaseP catalyzes the removal of the 5'-leader sequence from pre-tRNA to produce the mature 5'-terminus. It can also cleave other RNA substrates such as 4.5S RNA. The protein component plays an auxiliary but essential role in vivo by binding to the 5'-leader sequence and broadening the substrate specificity of the ribozyme. In Mycolicibacterium paratuberculosis (strain ATCC BAA-968 / K-10) (Mycobacterium paratuberculosis), this protein is Ribonuclease P protein component.